A 103-amino-acid polypeptide reads, in one-letter code: Large ribosomal subunit protein bL21 (103 aa).

The protein belongs to the bacterial ribosomal protein bL21 family. As to quaternary structure, part of the 50S ribosomal subunit. Contacts protein L20.

This protein binds to 23S rRNA in the presence of protein L20. In Kocuria rhizophila (strain ATCC 9341 / DSM 348 / NBRC 103217 / DC2201), this protein is Large ribosomal subunit protein bL21.